The sequence spans 210 residues: Transcriptional regulator MxiE (210 aa).

Positions 99–199 (YHLVLYLLRT…GFSARELSNI (101 aa)) constitute an HTH araC/xylS-type domain. 2 DNA-binding regions (H-T-H motif) span residues 118 to 139 (KSLTEHYGVSEAYFRSLCRKAL) and 166 to 189 (ITSAAMNNGYASTSHFSNEIKTRL).

In terms of biological role, necessary for the secretion of ipa invasins. Probable transcriptional regulatory protein. The chain is Transcriptional regulator MxiE (mxiE) from Shigella flexneri.